Consider the following 123-residue polypeptide: S-adenosylmethionine decarboxylase proenzyme 2 (123 aa).

Ser-65 functions as the Schiff-base intermediate with substrate; via pyruvic acid in the catalytic mechanism. Ser-65 is subject to Pyruvic acid (Ser); by autocatalysis. The Proton acceptor; for processing activity role is filled by His-70. The Proton donor; for catalytic activity role is filled by Cys-85.

This sequence belongs to the prokaryotic AdoMetDC family. Type 1 subfamily. As to quaternary structure, heterotetramer of two alpha and two beta chains arranged as a dimer of alpha/beta heterodimers. The cofactor is pyruvate. In terms of processing, is synthesized initially as an inactive proenzyme. Formation of the active enzyme involves a self-maturation process in which the active site pyruvoyl group is generated from an internal serine residue via an autocatalytic post-translational modification. Two non-identical subunits are generated from the proenzyme in this reaction, and the pyruvate is formed at the N-terminus of the alpha chain, which is derived from the carboxyl end of the proenzyme. The post-translation cleavage follows an unusual pathway, termed non-hydrolytic serinolysis, in which the side chain hydroxyl group of the serine supplies its oxygen atom to form the C-terminus of the beta chain, while the remainder of the serine residue undergoes an oxidative deamination to produce ammonia and the pyruvoyl group blocking the N-terminus of the alpha chain.

The enzyme catalyses S-adenosyl-L-methionine + H(+) = S-adenosyl 3-(methylsulfanyl)propylamine + CO2. It functions in the pathway amine and polyamine biosynthesis; S-adenosylmethioninamine biosynthesis; S-adenosylmethioninamine from S-adenosyl-L-methionine: step 1/1. Functionally, catalyzes the decarboxylation of S-adenosylmethionine to S-adenosylmethioninamine (dcAdoMet), the propylamine donor required for the synthesis of the polyamines spermine and spermidine from the diamine putrescine. This chain is S-adenosylmethionine decarboxylase proenzyme 2, found in Bacillus cereus (strain ATCC 14579 / DSM 31 / CCUG 7414 / JCM 2152 / NBRC 15305 / NCIMB 9373 / NCTC 2599 / NRRL B-3711).